The primary structure comprises 250 residues: UDP-2,3-diacylglucosamine hydrolase (250 aa).

Mn(2+)-binding residues include D8, H10, D41, N79, and H114. Residue 79–80 (NR) participates in substrate binding. 5 residues coordinate substrate: D122, S160, D172, Q175, and H203. H203 and H205 together coordinate Mn(2+).

It belongs to the LpxH family. It depends on Mn(2+) as a cofactor.

The protein resides in the cell inner membrane. It carries out the reaction UDP-2-N,3-O-bis[(3R)-3-hydroxytetradecanoyl]-alpha-D-glucosamine + H2O = 2-N,3-O-bis[(3R)-3-hydroxytetradecanoyl]-alpha-D-glucosaminyl 1-phosphate + UMP + 2 H(+). Its pathway is glycolipid biosynthesis; lipid IV(A) biosynthesis; lipid IV(A) from (3R)-3-hydroxytetradecanoyl-[acyl-carrier-protein] and UDP-N-acetyl-alpha-D-glucosamine: step 4/6. Hydrolyzes the pyrophosphate bond of UDP-2,3-diacylglucosamine to yield 2,3-diacylglucosamine 1-phosphate (lipid X) and UMP by catalyzing the attack of water at the alpha-P atom. Involved in the biosynthesis of lipid A, a phosphorylated glycolipid that anchors the lipopolysaccharide to the outer membrane of the cell. The polypeptide is UDP-2,3-diacylglucosamine hydrolase (Xylella fastidiosa (strain M23)).